The sequence spans 372 residues: Queuine tRNA-ribosyltransferase (372 aa).

Residue Asp-92 is the Proton acceptor of the active site. Residues 92–96, Asp-146, Gln-188, and Gly-215 each bind substrate; that span reads DSGGY. Residues 246-252 form an RNA binding region; that stretch reads GIGTIRE. Asp-265 (nucleophile) is an active-site residue. The segment at 270–274 is RNA binding; important for wobble base 34 recognition; the sequence is TRLGR. Zn(2+)-binding residues include Cys-303, Cys-305, Cys-308, and His-334.

Belongs to the queuine tRNA-ribosyltransferase family. In terms of assembly, homodimer. Within each dimer, one monomer is responsible for RNA recognition and catalysis, while the other monomer binds to the replacement base PreQ1. The cofactor is Zn(2+).

It catalyses the reaction 7-aminomethyl-7-carbaguanine + guanosine(34) in tRNA = 7-aminomethyl-7-carbaguanosine(34) in tRNA + guanine. Its pathway is tRNA modification; tRNA-queuosine biosynthesis. Its function is as follows. Catalyzes the base-exchange of a guanine (G) residue with the queuine precursor 7-aminomethyl-7-deazaguanine (PreQ1) at position 34 (anticodon wobble position) in tRNAs with GU(N) anticodons (tRNA-Asp, -Asn, -His and -Tyr). Catalysis occurs through a double-displacement mechanism. The nucleophile active site attacks the C1' of nucleotide 34 to detach the guanine base from the RNA, forming a covalent enzyme-RNA intermediate. The proton acceptor active site deprotonates the incoming PreQ1, allowing a nucleophilic attack on the C1' of the ribose to form the product. After dissociation, two additional enzymatic reactions on the tRNA convert PreQ1 to queuine (Q), resulting in the hypermodified nucleoside queuosine (7-(((4,5-cis-dihydroxy-2-cyclopenten-1-yl)amino)methyl)-7-deazaguanosine). The protein is Queuine tRNA-ribosyltransferase of Prochlorococcus marinus (strain SARG / CCMP1375 / SS120).